The primary structure comprises 49 residues: Sperm protamine P1 (49 aa).

Belongs to the protamine P1 family. In terms of tissue distribution, testis.

The protein localises to the nucleus. Its subcellular location is the chromosome. Protamines substitute for histones in the chromatin of sperm during the haploid phase of spermatogenesis. They compact sperm DNA into a highly condensed, stable and inactive complex. In Pteropus hypomelanus (Island flying fox), this protein is Sperm protamine P1 (PRM1).